Reading from the N-terminus, the 183-residue chain is Negative modulator of initiation of replication (183 aa).

The segment at 43–70 (VNDTQPVSAPAPSKAAPSAGNESRPQDR) is disordered. Residues 50–61 (SAPAPSKAAPSA) show a composition bias toward low complexity. 3 interaction with DNA regions span residues 89–90 (AV), 118–122 (RTRIY), and 152–158 (NTNTGRK).

This sequence belongs to the SeqA family. Homodimer. Polymerizes to form helical filaments.

The protein localises to the cytoplasm. Negative regulator of replication initiation, which contributes to regulation of DNA replication and ensures that replication initiation occurs exactly once per chromosome per cell cycle. Binds to pairs of hemimethylated GATC sequences in the oriC region, thus preventing assembly of replication proteins and re-initiation at newly replicated origins. Repression is relieved when the region becomes fully methylated. The protein is Negative modulator of initiation of replication of Pantoea ananatis (strain AJ13355).